Consider the following 257-residue polypeptide: Putative hydro-lyase BceJ2315_40370 (257 aa).

The protein belongs to the D-glutamate cyclase family.

This Burkholderia cenocepacia (strain ATCC BAA-245 / DSM 16553 / LMG 16656 / NCTC 13227 / J2315 / CF5610) (Burkholderia cepacia (strain J2315)) protein is Putative hydro-lyase BceJ2315_40370.